A 420-amino-acid chain; its full sequence is Gamma-glutamyl phosphate reductase (420 aa).

It belongs to the gamma-glutamyl phosphate reductase family.

The protein localises to the cytoplasm. It carries out the reaction L-glutamate 5-semialdehyde + phosphate + NADP(+) = L-glutamyl 5-phosphate + NADPH + H(+). It functions in the pathway amino-acid biosynthesis; L-proline biosynthesis; L-glutamate 5-semialdehyde from L-glutamate: step 2/2. Catalyzes the NADPH-dependent reduction of L-glutamate 5-phosphate into L-glutamate 5-semialdehyde and phosphate. The product spontaneously undergoes cyclization to form 1-pyrroline-5-carboxylate. This is Gamma-glutamyl phosphate reductase from Streptococcus gordonii (strain Challis / ATCC 35105 / BCRC 15272 / CH1 / DL1 / V288).